The chain runs to 210 residues: High-affinity nitrate transporter 3.1 (210 aa).

The first 22 residues, 1–22 (MAIQKILFASLLICSLIQSIHG), serve as a signal peptide directing secretion. The helical transmembrane segment at 178 to 198 (LDIASICFSVFSVVALVVFFV) threads the bilayer.

It belongs to the NAR2 family. In terms of assembly, heterotetramer composed of two NRT2.1 and two NRT3.1. Interacts with NRT2.1 and NRT2.3. Interacts with all other NRT2 transporters, including NRT2.5. Highly expressed in roots. Detected in shoots.

It localises to the cell membrane. Acts as a dual component transporter with NTR2.1. Required for high-affinity nitrate transport. Acts as a repressor of lateral root initiation. May be involved in targeting NRT2 proteins to the plasma membrane. The protein is High-affinity nitrate transporter 3.1 (NRT3.1) of Arabidopsis thaliana (Mouse-ear cress).